The chain runs to 348 residues: S-adenosylmethionine:tRNA ribosyltransferase-isomerase (348 aa).

This sequence belongs to the QueA family. As to quaternary structure, monomer.

The protein resides in the cytoplasm. The catalysed reaction is 7-aminomethyl-7-carbaguanosine(34) in tRNA + S-adenosyl-L-methionine = epoxyqueuosine(34) in tRNA + adenine + L-methionine + 2 H(+). It participates in tRNA modification; tRNA-queuosine biosynthesis. Transfers and isomerizes the ribose moiety from AdoMet to the 7-aminomethyl group of 7-deazaguanine (preQ1-tRNA) to give epoxyqueuosine (oQ-tRNA). The chain is S-adenosylmethionine:tRNA ribosyltransferase-isomerase from Cytophaga hutchinsonii (strain ATCC 33406 / DSM 1761 / CIP 103989 / NBRC 15051 / NCIMB 9469 / D465).